The following is a 343-amino-acid chain: Dihydroorotate dehydrogenase (quinone) (343 aa).

Residues 58–62 and serine 82 each bind FMN; that span reads AGYDK. Lysine 62 is a substrate binding site. 107–111 lines the substrate pocket; sequence NRMGF. Positions 136 and 167 each coordinate FMN. Asparagine 167 lines the substrate pocket. Catalysis depends on serine 170, which acts as the Nucleophile. Position 172 (asparagine 172) interacts with substrate. The FMN site is built by lysine 206 and serine 234. 235-236 is a binding site for substrate; sequence NT. FMN contacts are provided by residues glycine 256, glycine 285, and 306-307; that span reads YS.

This sequence belongs to the dihydroorotate dehydrogenase family. Type 2 subfamily. In terms of assembly, monomer. FMN serves as cofactor.

It is found in the cell membrane. It catalyses the reaction (S)-dihydroorotate + a quinone = orotate + a quinol. It functions in the pathway pyrimidine metabolism; UMP biosynthesis via de novo pathway; orotate from (S)-dihydroorotate (quinone route): step 1/1. Its function is as follows. Catalyzes the conversion of dihydroorotate to orotate with quinone as electron acceptor. The sequence is that of Dihydroorotate dehydrogenase (quinone) from Erythrobacter litoralis (strain HTCC2594).